The sequence spans 115 residues: Large ribosomal subunit protein bL19 (115 aa).

It belongs to the bacterial ribosomal protein bL19 family.

Its function is as follows. This protein is located at the 30S-50S ribosomal subunit interface and may play a role in the structure and function of the aminoacyl-tRNA binding site. The sequence is that of Large ribosomal subunit protein bL19 from Klebsiella pneumoniae (strain 342).